The chain runs to 312 residues: Small ribosomal subunit protein uS2 (312 aa).

The protein belongs to the universal ribosomal protein uS2 family. In terms of assembly, component of the small ribosomal subunit. Mature ribosomes consist of a small (40S) and a large (60S) subunit. The 40S subunit contains about 33 different proteins and 1 molecule of RNA (18S). The 60S subunit contains about 49 different proteins and 3 molecules of RNA (25S, 5.8S and 5S). Interacts with ribosomal protein S21.

The protein resides in the cytoplasm. Required for the assembly and/or stability of the 40S ribosomal subunit. Required for the processing of the 20S rRNA-precursor to mature 18S rRNA in a late step of the maturation of 40S ribosomal subunits. This Vitis vinifera (Grape) protein is Small ribosomal subunit protein uS2.